Consider the following 477-residue polypeptide: Mitochondrial adenyl nucleotide antiporter SLC25A24 (477 aa).

The regulatory N-terminal domain stretch occupies residues 1–173 (MLRWLRGFVL…RFWKHSTGID (173 aa)). Over 1-197 (MLRWLRGFVL…EKKSGQWWRQ (197 aa)) the chain is Mitochondrial intermembrane. 4 EF-hand domains span residues 19–54 (EPPT…LGIP), 61–85 (EKIF…KYLK), 86–121 (DHEK…LGLT), and 122–157 (ISEQ…NPVT). Residues Asp-32, Asn-34, Asp-36, Val-38, Glu-43, Asp-68, Asn-70, Asp-72, Lys-74, Glu-79, Asp-99, Asn-101, Asp-103, Lys-105, Glu-110, Asp-135, Asp-137, Thr-139, Thr-141, and Glu-146 each coordinate Ca(2+). Residues 159–168 (IEEIIRFWKH) are linker region. Residues 174-477 (IGDSLTIPDE…MKQTLGVTQK (304 aa)) form a C-terminal transmembrane transporter domain region. 3 Solcar repeats span residues 192-278 (GQWW…YKKL), 286-371 (IGTF…LKSH), and 383-471 (PGVM…MKQT). The helical transmembrane segment at 198–215 (LLAGGVAGAVSRTSTAPL) threads the bilayer. At 216 to 252 (DRLKVMMQVHGSKSAKMNIYGGFQQMVKEGGIRSLWR) the chain is on the mitochondrial matrix side. Residues 253 to 272 (GNGTNVIKIAPETAVKFWAY) form a helical membrane-spanning segment. The Mitochondrial intermembrane segment spans residues 273–295 (EQYKKLLTEEGQKIGTFERFVSG). The helical transmembrane segment at 296 to 309 (SMAGATAQTFIYPM) threads the bilayer. At 310 to 345 (EVLKTRLAVGKTGQYSGMFDCAKKILKYEGMGAFYK) the chain is on the mitochondrial matrix side. Lys-320 is subject to N6-acetyllysine; alternate. Lys-320 carries the post-translational modification N6-succinyllysine; alternate. An N6-acetyllysine modification is found at Lys-336. Residues 346–365 (GYVPNLLGIIPYAGIDLAVY) form a helical membrane-spanning segment. Topologically, residues 366–388 (ELLKSHWLDNFAKDSVNPGVMVL) are mitochondrial intermembrane. A helical membrane pass occupies residues 389–406 (LGCGALSSTCGQLASYPL). The Mitochondrial matrix portion of the chain corresponds to 407-445 (ALVRTRMQAQAMIEKSPQLNMVGLFRRILSKEGLPGLYR). Position 437 is an N6-acetyllysine; alternate (Lys-437). Residue Lys-437 is modified to N6-succinyllysine; alternate. Residues 446-465 (GITPNFMKVLPAVGISYVVY) traverse the membrane as a helical segment. Residues 466 to 477 (ENMKQTLGVTQK) lie on the Mitochondrial intermembrane side of the membrane.

Belongs to the mitochondrial carrier (TC 2.A.29) family. In terms of assembly, monomer.

It is found in the mitochondrion inner membrane. It carries out the reaction Mg(2+)(out) + phosphate(in) + ATP(out) = Mg(2+)(in) + phosphate(out) + ATP(in). The enzyme catalyses ADP(out) + phosphate(in) + H(+)(out) = ADP(in) + phosphate(out) + H(+)(in). It catalyses the reaction AMP(out) + phosphate(in) = AMP(in) + phosphate(out). The catalysed reaction is phosphate(in) + ATP(out) + 2 H(+)(out) = phosphate(out) + ATP(in) + 2 H(+)(in). It carries out the reaction dADP(in) + ADP(out) = dADP(out) + ADP(in). The enzyme catalyses Mg(2+)(in) + ADP(out) + ATP(in) + H(+)(out) = Mg(2+)(out) + ADP(in) + ATP(out) + H(+)(in). It catalyses the reaction ADP(out) + diphosphate(in) = ADP(in) + diphosphate(out). The catalysed reaction is dAMP(in) + ADP(out) + H(+)(out) = dAMP(out) + ADP(in) + H(+)(in). It carries out the reaction 3'-AMP(in) + ADP(out) + H(+)(out) = 3'-AMP(out) + ADP(in) + H(+)(in). The enzyme catalyses dAMP(out) + phosphate(in) = dAMP(in) + phosphate(out). It catalyses the reaction 3'-AMP(out) + phosphate(in) = 3'-AMP(in) + phosphate(out). The catalysed reaction is dADP(out) + phosphate(in) + H(+)(out) = dADP(in) + phosphate(out) + H(+)(in). With respect to regulation, activated by an increase in cytosolic calcium levels that induce a conformational change of the N-terminal regulatory domain, uncapping the channel and allowing transport. Inhibited by bathophenanthroline, mersalyl, p-hydroxymercuribenzoate, bromcresol purple and tannic acid. In terms of biological role, electroneutral antiporter that mediates the transport of adenyl nucleotides through the inner mitochondrial membrane. Originally identified as an ATP-magnesium/inorganic phosphate antiporter, it also acts as a broad specificity adenyl nucleotide antiporter. By regulating the mitochondrial matrix adenyl nucleotide pool could adapt to changing cellular energetic demands and indirectly regulate adenyl nucleotide-dependent metabolic pathways. In vitro, a low activity is also observed with guanyl and pyrimidine nucleotides. May play a role in protecting cells against oxidative stress-induced cell death, by buffering calcium levels in the mitochondrial matrix through the formation of calcium-phosphate precipitates. In Bos taurus (Bovine), this protein is Mitochondrial adenyl nucleotide antiporter SLC25A24 (SLC25A24).